The following is an 897-amino-acid chain: Interleukin enhancer-binding factor 3-A (897 aa).

Residues 5 to 379 (RIFLNDDRHV…PLKRPIEEDG (375 aa)) enclose the DZF domain. Disordered stretches follow at residues 52–85 (QEKD…GENP), 364–403 (TTYA…PPQV), and 466–502 (MGLP…EVDS). Basic and acidic residues-rich tracts occupy residues 72–81 (EEGKDSEMKT) and 373–384 (RPIEEDGDDKSP). Residues 372 to 390 (KRPIEEDGDDKSPSKKKKK) carry the Bipartite nuclear localization signal motif. 2 consecutive DRBM domains span residues 399-468 (EPPQ…DMGL) and 521-587 (HGKN…KLFP). 2 disordered regions span residues 627–650 (PPPQ…GRGG) and 708–797 (GDSY…AQGA). The segment covering 637–650 (RGGMNRGRGRGRGG) has biased composition (gly residues). Residues 714-747 (PTPPKPFVNKKPPPPQQQQQQQPPPQHASNPPKP) show a composition bias toward pro residues. The span at 749 to 794 (YNQGYQGHQGGQQQQQQQQQQQTYNQNQYSNYGPPQKQKGGYNQGA) shows a compositional bias: low complexity.

A component of a ybx2/frgy2-containing mRNA-ribonucleoprotein (mRNP) complex. Also a component of the CCAAT box transcription factor (CBTF) complex. Phosphorylated. Phosphorylation affects nuclear translocation. In terms of processing, methylated by protein arginine N-methyltransferase 1 (prmt1b) in the RGG-rich domain. Methylation decreases DNA-binding and thereby decreases transcription of the gata2 gene, but does not regulate dsRNA binding or subcellular localization. In terms of tissue distribution, expressed mainly in the ectoderm (at protein level).

The protein localises to the nucleus. It localises to the cytoplasm. RNA-binding protein that plays an essential role in the biogenesis of circular RNAs (circRNAs) which are produced by back-splicing circularization of pre-mRNAs. Within the nucleus, promotes circRNAs processing by stabilizing the regulatory elements residing in the flanking introns of the circularized exons. Plays thereby a role in the back-splicing of a subset of circRNAs. As a consequence, participates in a wide range of transcriptional and post-transcriptional processes. Binds to poly-U elements and AU-rich elements (AREs) in the 3'-UTR of target mRNAs. Upon viral infection, ILF3 accumulates in the cytoplasm and participates in the innate antiviral response. Mechanistically, ILF3 becomes phosphorylated and activated by the double-stranded RNA-activated protein kinase/PKR which releases ILF3 from cellular mature circRNAs. In turn, unbound ILF3 molecules are able to interact with and thus inhibit viral mRNAs. Has a cytoplasmic role early in development as part of a ribonucleoprotein (mRNP) complex which may regulate mRNA transport and/or translation. Following nuclear localization at the mid-blastula transition, acts as a transcription factor and binds the 5'-CCAAT-3' promoter sequence to regulate transcription of the gata2 gene as a subunit of the CCAAT box transcription factor (CBTF). Its role as an mRNP component negatively regulates its activity as a transcription factor by precluding its nuclear localization. This is Interleukin enhancer-binding factor 3-A (ilf3-a) from Xenopus laevis (African clawed frog).